The primary structure comprises 167 residues: Homing endonuclease I-ApeII (167 aa).

Belongs to the LAGLIDADG endonuclease family.

Its function is as follows. Endonuclease involved in rRNA intron I-gamma homing. This Aeropyrum pernix (strain ATCC 700893 / DSM 11879 / JCM 9820 / NBRC 100138 / K1) protein is Homing endonuclease I-ApeII (apeII).